Consider the following 410-residue polypeptide: Protein translocase subunit SecY 2 (410 aa).

10 helical membrane passes run 2 to 22 (ILII…SAAL), 45 to 65 (FSIM…VQLL), 94 to 114 (LTLV…NTLT), 125 to 145 (FTII…MWLG), 147 to 167 (LITE…GILV), 188 to 208 (WIRF…IVWF), 241 to 261 (VIPV…LMFF), 284 to 304 (GVII…IVQI), 339 to 359 (YLSL…LLVA), and 366 to 386 (LQIG…IEIG).

This sequence belongs to the SecY/SEC61-alpha family. In terms of assembly, component of the Sec protein translocase complex. Heterotrimer consisting of SecY, SecE and SecG subunits. The heterotrimers can form oligomers, although 1 heterotrimer is thought to be able to translocate proteins. Interacts with the ribosome. Interacts with SecDF, and other proteins may be involved. Interacts with SecA.

It localises to the cell membrane. The central subunit of the protein translocation channel SecYEG. Consists of two halves formed by TMs 1-5 and 6-10. These two domains form a lateral gate at the front which open onto the bilayer between TMs 2 and 7, and are clamped together by SecE at the back. The channel is closed by both a pore ring composed of hydrophobic SecY resides and a short helix (helix 2A) on the extracellular side of the membrane which forms a plug. The plug probably moves laterally to allow the channel to open. The ring and the pore may move independently. The protein is Protein translocase subunit SecY 2 of Lactobacillus kefiranofaciens subsp. kefiranofaciens.